The primary structure comprises 221 residues: Translation initiation factor 6 (221 aa).

Belongs to the eIF-6 family.

Binds to the 50S ribosomal subunit and prevents its association with the 30S ribosomal subunit to form the 70S initiation complex. The chain is Translation initiation factor 6 from Nitrosopumilus maritimus (strain SCM1).